Reading from the N-terminus, the 782-residue chain is ATP-dependent 6-phosphofructokinase, muscle type (782 aa).

Position 2 is an N-acetylthreonine (Thr-2). The tract at residues 2–390 (THEEHHAAKT…NWEVYKLLAH (389 aa)) is N-terminal catalytic PFK domain 1. ATP contacts are provided by residues Gly-25, 88–89 (RC), and 118–121 (GDGS). Asp-119 serves as a coordination point for Mg(2+). The residue at position 133 (Ser-133) is a Phosphoserine. Residues 164–166 (SID), Arg-201, 208–210 (MGR), Glu-264, Arg-292, and 298–301 (HVQR) contribute to the substrate site. Catalysis depends on Asp-166, which acts as the Proton acceptor. The residue at position 377 (Ser-377) is a Phosphoserine. The segment at 391–403 (IRPPVSKTSATMH) is interdomain linker. The C-terminal regulatory PFK domain 2 stretch occupies residues 404–782 (TVAVMNVGAP…SRKRSGETSI (379 aa)). Residues Arg-473 and 530–534 (TVSNN) each bind beta-D-fructose 2,6-bisphosphate. Residue Ser-532 is glycosylated (O-linked (GlcNAc) serine). N6-(2-hydroxyisobutyryl)lysine is present on Lys-559. Beta-D-fructose 2,6-bisphosphate is bound by residues Arg-568, 575–577 (MGG), Glu-631, Arg-657, and 663–666 (HMQQ). Ser-669 carries the post-translational modification Phosphoserine. Arg-737 provides a ligand contact to beta-D-fructose 2,6-bisphosphate. A Phosphoserine modification is found at Ser-777.

This sequence belongs to the phosphofructokinase type A (PFKA) family. ATP-dependent PFK group I subfamily. Eukaryotic two domain clade 'E' sub-subfamily. As to quaternary structure, homo- and heterotetramers. Phosphofructokinase (PFK) enzyme functions as a tetramer composed of different combinations of 3 types of subunits, called PFKM (M), PFKL (L) and PFKP (P). The composition of the PFK tetramer differs according to the tissue type it is present in. The kinetic and regulatory properties of the tetrameric enzyme are dependent on the subunit composition, hence can vary across tissues. Interacts (via C-terminus) with HK1 (via N-terminal spermatogenic cell-specific region). The cofactor is Mg(2+). Post-translationally, glcNAcylation decreases enzyme activity.

It localises to the cytoplasm. The enzyme catalyses beta-D-fructose 6-phosphate + ATP = beta-D-fructose 1,6-bisphosphate + ADP + H(+). Its pathway is carbohydrate degradation; glycolysis; D-glyceraldehyde 3-phosphate and glycerone phosphate from D-glucose: step 3/4. Allosterically activated by ADP, AMP, or fructose 2,6-bisphosphate, and allosterically inhibited by ATP or citrate. In terms of biological role, catalyzes the phosphorylation of D-fructose 6-phosphate to fructose 1,6-bisphosphate by ATP, the first committing step of glycolysis. The chain is ATP-dependent 6-phosphofructokinase, muscle type (PFKM) from Canis lupus familiaris (Dog).